The following is a 210-amino-acid chain: Transposable element activator uncharacterized 23 kDa protein (210 aa).

Positions 67 to 78 (SGRMGGPRRDGR) are enriched in basic and acidic residues. Positions 67 to 87 (SGRMGGPRRDGRVASSGVEGG) are disordered.

This is Transposable element activator uncharacterized 23 kDa protein from Zea mays (Maize).